The following is a 162-amino-acid chain: Photosystem II extrinsic protein V (162 aa).

Positions 1-25 (MLKRCLWLVVTVLFAWQVFNGTAIA) are cleaved as a signal peptide. 4 residues coordinate heme c: Cys62, Cys65, His66, and His117.

The protein belongs to the cytochrome c family. PsbV subfamily. As to quaternary structure, PSII is composed of 1 copy each of membrane proteins PsbA, PsbB, PsbC, PsbD, PsbE, PsbF, PsbH, PsbI, PsbJ, PsbK, PsbL, PsbM, PsbT, PsbX, PsbY, PsbZ, Psb30/Ycf12, peripheral proteins PsbO, CyanoQ (PsbQ), PsbU, PsbV and a large number of cofactors. It forms dimeric complexes. Requires heme c as cofactor.

It is found in the cellular thylakoid membrane. Its function is as follows. One of the extrinsic, lumenal subunits of photosystem II (PSII). PSII is a light-driven water plastoquinone oxidoreductase, using light energy to abstract electrons from H(2)O, generating a proton gradient subsequently used for ATP formation. The extrinsic proteins stabilize the structure of photosystem II oxygen-evolving complex (OEC), the ion environment of oxygen evolution and protect the OEC against heat-induced inactivation. Low-potential cytochrome c that plays a role in the OEC of PSII. The sequence is that of Photosystem II extrinsic protein V from Cyanothece sp. (strain PCC 7425 / ATCC 29141).